Here is a 330-residue protein sequence, read N- to C-terminus: tRNA-modifying protein YgfZ (330 aa).

Positions 28 and 190 each coordinate folate.

Belongs to the tRNA-modifying YgfZ family.

It is found in the cytoplasm. Functionally, folate-binding protein involved in regulating the level of ATP-DnaA and in the modification of some tRNAs. It is probably a key factor in regulatory networks that act via tRNA modification, such as initiation of chromosomal replication. In Yersinia pseudotuberculosis serotype IB (strain PB1/+), this protein is tRNA-modifying protein YgfZ.